The primary structure comprises 260 residues: Coiled-coil domain-containing protein 127 (260 aa).

Residues 76–139 (AVISEHRRAV…EKSRLQPLRN (64 aa)) are a coiled coil.

This is Coiled-coil domain-containing protein 127 (Ccdc127) from Mus musculus (Mouse).